Reading from the N-terminus, the 463-residue chain is GTPase Der (463 aa).

Residues 1-20 are disordered; the sequence is MDEGDEDLISGRGFTEGARK. 2 EngA-type G domains span residues 27–190 and 202–375; these read GVLA…KQAE and RRVA…ESWD. GTP contacts are provided by residues 33 to 40, 80 to 84, 142 to 145, 208 to 215, 255 to 259, and 320 to 323; these read GRPNVGKS, DTGGW, NKID, DTAGI, and NKWD. The KH-like domain occupies 376-458; sequence QRIPTGKLNA…PIQISVNIRE (83 aa).

This sequence belongs to the TRAFAC class TrmE-Era-EngA-EngB-Septin-like GTPase superfamily. EngA (Der) GTPase family. In terms of assembly, associates with the 50S ribosomal subunit.

Its function is as follows. GTPase that plays an essential role in the late steps of ribosome biogenesis. This chain is GTPase Der, found in Bifidobacterium longum (strain NCC 2705).